A 362-amino-acid polypeptide reads, in one-letter code: Molybdenum import ATP-binding protein ModC (362 aa).

Residues 2 to 236 (ASPIEVRLQM…LDLPLAMGSD (235 aa)) enclose the ABC transporter domain. 34–41 (GPSGSGKT) provides a ligand contact to ATP. The region spanning 297-362 (QSSILNRLPV…AQIKAVAVLA (66 aa)) is the Mop domain.

It belongs to the ABC transporter superfamily. Molybdate importer (TC 3.A.1.8) family. The complex is composed of two ATP-binding proteins (ModC), two transmembrane proteins (ModB) and a solute-binding protein (ModA).

The protein localises to the cell inner membrane. It catalyses the reaction molybdate(out) + ATP + H2O = molybdate(in) + ADP + phosphate + H(+). Its function is as follows. Part of the ABC transporter complex ModABC involved in molybdenum import. Responsible for energy coupling to the transport system. This chain is Molybdenum import ATP-binding protein ModC, found in Pseudomonas syringae pv. syringae (strain B728a).